The chain runs to 600 residues: Methylenetetrahydrofolate reductase 2 (600 aa).

E22 serves as the catalytic Proton donor/acceptor. Residues 22–27 (EYFVPK) and 54–55 (TW) contribute to the NAD(+) site. FAD-binding positions include 54-55 (TW), H84, 114-116 (RGD), 133-134 (YA), Y156, D171, and K178. D116 lines the substrate pocket. Residues Q189 and Y282 each contribute to the substrate site.

This sequence belongs to the methylenetetrahydrofolate reductase family. Requires FAD as cofactor.

The enzyme catalyses (6S)-5-methyl-5,6,7,8-tetrahydrofolate + NADP(+) = (6R)-5,10-methylene-5,6,7,8-tetrahydrofolate + NADPH + H(+). The protein operates within one-carbon metabolism; tetrahydrofolate interconversion. The chain is Methylenetetrahydrofolate reductase 2 (MET13) from Saccharomyces cerevisiae (strain ATCC 204508 / S288c) (Baker's yeast).